We begin with the raw amino-acid sequence, 567 residues long: Urease subunit alpha (567 aa).

A Urease domain is found at 129–567; sequence GGIDAHIHFI…LPLAQLYCLF (439 aa). Residues histidine 134, histidine 136, and lysine 217 each contribute to the Ni(2+) site. Position 217 is an N6-carboxylysine (lysine 217). Residue histidine 219 participates in substrate binding. Ni(2+) is bound by residues histidine 246 and histidine 272. Histidine 320 functions as the Proton donor in the catalytic mechanism. Aspartate 360 serves as a coordination point for Ni(2+).

This sequence belongs to the metallo-dependent hydrolases superfamily. Urease alpha subunit family. In terms of assembly, heterotrimer of UreA (gamma), UreB (beta) and UreC (alpha) subunits. Three heterotrimers associate to form the active enzyme. Ni cation serves as cofactor. Post-translationally, carboxylation allows a single lysine to coordinate two nickel ions.

The protein resides in the cytoplasm. It catalyses the reaction urea + 2 H2O + H(+) = hydrogencarbonate + 2 NH4(+). Its pathway is nitrogen metabolism; urea degradation; CO(2) and NH(3) from urea (urease route): step 1/1. This is Urease subunit alpha from Alteromonas mediterranea (strain DSM 17117 / CIP 110805 / LMG 28347 / Deep ecotype).